We begin with the raw amino-acid sequence, 137 residues long: Large ribosomal subunit protein uL16 (137 aa).

It belongs to the universal ribosomal protein uL16 family. As to quaternary structure, part of the 50S ribosomal subunit.

Binds 23S rRNA and is also seen to make contacts with the A and possibly P site tRNAs. The chain is Large ribosomal subunit protein uL16 from Streptococcus mutans serotype c (strain ATCC 700610 / UA159).